The sequence spans 218 residues: Elongation factor Ts (218 aa).

The tract at residues 82-85 (TDFV) is involved in Mg(2+) ion dislocation from EF-Tu.

Belongs to the EF-Ts family.

The protein resides in the cytoplasm. Associates with the EF-Tu.GDP complex and induces the exchange of GDP to GTP. It remains bound to the aminoacyl-tRNA.EF-Tu.GTP complex up to the GTP hydrolysis stage on the ribosome. The sequence is that of Elongation factor Ts from Prochlorococcus marinus (strain MIT 9211).